Here is a 73-residue protein sequence, read N- to C-terminus: Large ribosomal subunit protein uL29 (73 aa).

The disordered stretch occupies residues Met1–Asp20.

The protein belongs to the universal ribosomal protein uL29 family.

In Protochlamydia amoebophila (strain UWE25), this protein is Large ribosomal subunit protein uL29.